Here is a 414-residue protein sequence, read N- to C-terminus: S-adenosylmethionine synthase (414 aa).

Histidine 11 serves as a coordination point for ATP. Residue aspartate 13 participates in Mg(2+) binding. Residue glutamate 39 coordinates K(+). L-methionine is bound by residues glutamate 52 and glutamine 95. Residues 95–105 (QSPDIAQGVNM) are flexible loop. Residues 169 to 171 (DGK), 245 to 246 (KF), aspartate 254, 260 to 261 (RK), alanine 277, and lysine 281 contribute to the ATP site. Position 254 (aspartate 254) interacts with L-methionine. Residue lysine 285 coordinates L-methionine.

Belongs to the AdoMet synthase family. In terms of assembly, homotetramer; dimer of dimers. Mg(2+) is required as a cofactor. The cofactor is K(+).

Its subcellular location is the cytoplasm. It catalyses the reaction L-methionine + ATP + H2O = S-adenosyl-L-methionine + phosphate + diphosphate. It participates in amino-acid biosynthesis; S-adenosyl-L-methionine biosynthesis; S-adenosyl-L-methionine from L-methionine: step 1/1. Its function is as follows. Catalyzes the formation of S-adenosylmethionine (AdoMet) from methionine and ATP. The overall synthetic reaction is composed of two sequential steps, AdoMet formation and the subsequent tripolyphosphate hydrolysis which occurs prior to release of AdoMet from the enzyme. The sequence is that of S-adenosylmethionine synthase from Synechococcus sp. (strain JA-2-3B'a(2-13)) (Cyanobacteria bacterium Yellowstone B-Prime).